The primary structure comprises 537 residues: Membrane protein insertase YidC (537 aa).

5 consecutive transmembrane segments (helical) span residues 6-26, 341-363, 411-431, 449-469, and 490-510; these read SLLA…WEID, LVSN…LYPL, LGGC…YWTF, LSAQ…MFLL, and PVIF…YWLV.

The protein belongs to the OXA1/ALB3/YidC family. Type 1 subfamily. In terms of assembly, interacts with the Sec translocase complex via SecD. Specifically interacts with transmembrane segments of nascent integral membrane proteins during membrane integration.

The protein localises to the cell inner membrane. Its function is as follows. Required for the insertion and/or proper folding and/or complex formation of integral membrane proteins into the membrane. Involved in integration of membrane proteins that insert both dependently and independently of the Sec translocase complex, as well as at least some lipoproteins. Aids folding of multispanning membrane proteins. The polypeptide is Membrane protein insertase YidC (Actinobacillus succinogenes (strain ATCC 55618 / DSM 22257 / CCUG 43843 / 130Z)).